The chain runs to 64 residues: UPF0434 protein Oant_3286 (64 aa).

This sequence belongs to the UPF0434 family.

The chain is UPF0434 protein Oant_3286 from Brucella anthropi (strain ATCC 49188 / DSM 6882 / CCUG 24695 / JCM 21032 / LMG 3331 / NBRC 15819 / NCTC 12168 / Alc 37) (Ochrobactrum anthropi).